The following is a 610-amino-acid chain: Elongation factor 4 (610 aa).

Positions 11–193 (EKIRNFSIIA…QIVEKVPAPT (183 aa)) constitute a tr-type G domain. Residues 23-28 (DHGKST) and 140-143 (NKID) contribute to the GTP site.

Belongs to the TRAFAC class translation factor GTPase superfamily. Classic translation factor GTPase family. LepA subfamily.

It localises to the cell membrane. The enzyme catalyses GTP + H2O = GDP + phosphate + H(+). Its function is as follows. Required for accurate and efficient protein synthesis under certain stress conditions. May act as a fidelity factor of the translation reaction, by catalyzing a one-codon backward translocation of tRNAs on improperly translocated ribosomes. Back-translocation proceeds from a post-translocation (POST) complex to a pre-translocation (PRE) complex, thus giving elongation factor G a second chance to translocate the tRNAs correctly. Binds to ribosomes in a GTP-dependent manner. The protein is Elongation factor 4 of Streptococcus pyogenes serotype M2 (strain MGAS10270).